The primary structure comprises 409 residues: uncharacterized protein (409 aa).

Residues 305–409 enclose the HTH arsR-type domain; it reads LTKIDEKVVK…LIGEDDELEM (105 aa).

This is an uncharacterized protein from Methanocaldococcus jannaschii (strain ATCC 43067 / DSM 2661 / JAL-1 / JCM 10045 / NBRC 100440) (Methanococcus jannaschii).